A 153-amino-acid chain; its full sequence is Endoribonuclease YbeY (153 aa).

3 residues coordinate Zn(2+): H115, H119, and H125.

Belongs to the endoribonuclease YbeY family. Zn(2+) is required as a cofactor.

The protein localises to the cytoplasm. Functionally, single strand-specific metallo-endoribonuclease involved in late-stage 70S ribosome quality control and in maturation of the 3' terminus of the 16S rRNA. The protein is Endoribonuclease YbeY of Blochmanniella floridana.